The following is a 73-amino-acid chain: MAKKDGAIEVEGRVVEPLPNAMFRIELENGHKVLAHISGKMRQHYIRILPEDRVVVELSPYDLSRGRIVYRYK.

The S1-like domain occupies 1–73; it reads MAKKDGAIEV…SRGRIVYRYK (73 aa).

Belongs to the IF-1 family. In terms of assembly, component of the 30S ribosomal translation pre-initiation complex which assembles on the 30S ribosome in the order IF-2 and IF-3, IF-1 and N-formylmethionyl-tRNA(fMet); mRNA recruitment can occur at any time during PIC assembly.

It localises to the cytoplasm. In terms of biological role, one of the essential components for the initiation of protein synthesis. Stabilizes the binding of IF-2 and IF-3 on the 30S subunit to which N-formylmethionyl-tRNA(fMet) subsequently binds. Helps modulate mRNA selection, yielding the 30S pre-initiation complex (PIC). Upon addition of the 50S ribosomal subunit IF-1, IF-2 and IF-3 are released leaving the mature 70S translation initiation complex. The sequence is that of Translation initiation factor IF-1 from Mycobacterium avium (strain 104).